The primary structure comprises 45 residues: Ice-structuring protein SS-8 (45 aa).

Met-1 bears the Blocked amino end (Met) mark. 3 consecutive repeats follow at residues 9 to 21, 22 to 33, and 34 to 45; these read KAAR…ALAA, KTAADAAAKAAA, and KAAAIAAAAASA.

It belongs to the type-I AFP family.

Its function is as follows. Antifreeze proteins lower the blood freezing point. This is Ice-structuring protein SS-8 from Myoxocephalus scorpius (Shorthorn sculpin).